Reading from the N-terminus, the 193-residue chain is Oligoribonuclease (193 aa).

Residues F20–L183 enclose the Exonuclease domain. Y141 is a catalytic residue.

This sequence belongs to the oligoribonuclease family.

It localises to the cytoplasm. Its function is as follows. 3'-to-5' exoribonuclease specific for small oligoribonucleotides. This chain is Oligoribonuclease, found in Paracidovorax citrulli (strain AAC00-1) (Acidovorax citrulli).